Reading from the N-terminus, the 256-residue chain is H-2 class II histocompatibility antigen, A-D alpha chain (256 aa).

The signal sequence occupies residues Met1 to Gly23. The alpha-1 stretch occupies residues Glu24–Asn111. Topologically, residues Glu24–Glu218 are extracellular. Residues Glu112–Trp205 are alpha-2. An Ig-like C1-type domain is found at Pro114–Glu206. Cys134 and Cys190 are oxidised to a cystine. N-linked (GlcNAc...) asparagine glycosylation occurs at Asn145. The segment at Glu206–Glu218 is connecting peptide. A helical transmembrane segment spans residues Thr219–Leu244. Residues Arg245–Leu256 lie on the Cytoplasmic side of the membrane.

This sequence belongs to the MHC class II family.

Its subcellular location is the membrane. The polypeptide is H-2 class II histocompatibility antigen, A-D alpha chain (H2-Aa) (Mus musculus (Mouse)).